The chain runs to 513 residues: Mannosyl-oligosaccharide alpha-1,2-mannosidase 1B (513 aa).

An N-terminal signal peptide occupies residues 1–21; that stretch reads MHLPSLSLSLTALAIASPSAA. N-linked (GlcNAc...) asparagine glycans are attached at residues Asn97, Asn117, Asn150, Asn184, Asn251, Asn322, Asn348, and Asn368. Cys334 and Cys363 are joined by a disulfide. Glu377 functions as the Proton donor in the catalytic mechanism. Thr503 is a binding site for Ca(2+).

Belongs to the glycosyl hydrolase 47 family. As to quaternary structure, monomer. It depends on Ca(2+) as a cofactor. The cofactor is Mg(2+).

The protein resides in the cytoplasmic vesicle lumen. The enzyme catalyses N(4)-(alpha-D-Man-(1-&gt;2)-alpha-D-Man-(1-&gt;2)-alpha-D-Man-(1-&gt;3)-[alpha-D-Man-(1-&gt;2)-alpha-D-Man-(1-&gt;3)-[alpha-D-Man-(1-&gt;2)-alpha-D-Man-(1-&gt;6)]-alpha-D-Man-(1-&gt;6)]-beta-D-Man-(1-&gt;4)-beta-D-GlcNAc-(1-&gt;4)-beta-D-GlcNAc)-L-asparaginyl-[protein] (N-glucan mannose isomer 9A1,2,3B1,2,3) + 4 H2O = N(4)-(alpha-D-Man-(1-&gt;3)-[alpha-D-Man-(1-&gt;3)-[alpha-D-Man-(1-&gt;6)]-alpha-D-Man-(1-&gt;6)]-beta-D-Man-(1-&gt;4)-beta-D-GlcNAc-(1-&gt;4)-beta-D-GlcNAc)-L-asparaginyl-[protein] (N-glucan mannose isomer 5A1,2) + 4 beta-D-mannose. It catalyses the reaction N(4)-(alpha-D-Man-(1-&gt;2)-alpha-D-Man-(1-&gt;2)-alpha-D-Man-(1-&gt;3)-[alpha-D-Man-(1-&gt;3)-[alpha-D-Man-(1-&gt;2)-alpha-D-Man-(1-&gt;6)]-alpha-D-Man-(1-&gt;6)]-beta-D-Man-(1-&gt;4)-beta-D-GlcNAc-(1-&gt;4)-beta-D-GlcNAc)-L-asparaginyl-[protein] (N-glucan mannose isomer 8A1,2,3B1,3) + 3 H2O = N(4)-(alpha-D-Man-(1-&gt;3)-[alpha-D-Man-(1-&gt;3)-[alpha-D-Man-(1-&gt;6)]-alpha-D-Man-(1-&gt;6)]-beta-D-Man-(1-&gt;4)-beta-D-GlcNAc-(1-&gt;4)-beta-D-GlcNAc)-L-asparaginyl-[protein] (N-glucan mannose isomer 5A1,2) + 3 beta-D-mannose. It functions in the pathway protein modification; protein glycosylation. Functionally, involved in the maturation of Asn-linked oligosaccharides. Progressively trims alpha-1,2-linked mannose residues from Man(9)GlcNAc(2) to produce Man(5)GlcNAc(2). This chain is Mannosyl-oligosaccharide alpha-1,2-mannosidase 1B (mns1B), found in Aspergillus phoenicis (Aspergillus saitoi).